A 202-amino-acid polypeptide reads, in one-letter code: NADH-quinone oxidoreductase subunit C (202 aa).

It belongs to the complex I 30 kDa subunit family. In terms of assembly, NDH-1 is composed of 14 different subunits. Subunits NuoB, C, D, E, F, and G constitute the peripheral sector of the complex.

Its subcellular location is the cell inner membrane. The enzyme catalyses a quinone + NADH + 5 H(+)(in) = a quinol + NAD(+) + 4 H(+)(out). NDH-1 shuttles electrons from NADH, via FMN and iron-sulfur (Fe-S) centers, to quinones in the respiratory chain. The immediate electron acceptor for the enzyme in this species is believed to be ubiquinone. Couples the redox reaction to proton translocation (for every two electrons transferred, four hydrogen ions are translocated across the cytoplasmic membrane), and thus conserves the redox energy in a proton gradient. The protein is NADH-quinone oxidoreductase subunit C of Bartonella henselae (strain ATCC 49882 / DSM 28221 / CCUG 30454 / Houston 1) (Rochalimaea henselae).